The chain runs to 124 residues: Salivary protein 15 Iric-3 (124 aa).

A signal peptide spans 1-22 (MESFVAMKVVCIILLFVIAAEA). N-linked (GlcNAc...) asparagine glycosylation is found at Asn82 and Asn93. Positions 105–124 (GPNNQTCHKKDECVGYIPGC) are CD4-binding.

This sequence belongs to the salp15 family. Interacts with host CD4. Interacts with host DC-SIGN (CD209). Interacts with Borrelia outer surface protein C (OspC). In terms of tissue distribution, expressed in salivary glands. Detected in fed adult female.

The protein localises to the secreted. Its function is as follows. Salivary tick protein that downregulates host immune system by binding to both dendritic cells, and CD4(+) T cells. Specifically binds to the CD4 coreceptor on T cells. This interaction prevents the activation of the Src kinase, Lck, and its downstream substrate Zap-70, and results in deficient activation of PLCgamma1, the repression of calcium fluxes triggered by T-cell antigen receptor (TCR) ligation, and a subsequent reduction in interleukin-2 production. This salivary protein also binds to DC-SIGN (CD209) on dendritic cells (DC) and activates the Raf-1 kinase/MEK signaling pathway that results in down-regulating expression of pro-inflammatory cytokines. Furthermore, it inhibits T cell proliferation induced by DCs. In addition, it inhibits in vitro keratinocyte inflammation induced by Borrelia burgdorferi or by the major outer surface protein (OspC) of Borrelia. In addition, it downregulates chemokines and monocyte chemoattractant protein 1, as well as several antimicrobial peptides such as defensins, cathelicidin, psoriasin, and RNase 7. Apart from its immunomodulatory activities, it is also associated with protection of Borrelia spirochetes from antibody-mediated killing through its binding to OspC. In vivo, tests on different immune disease animal models show promising therapeutic results, e.g., in inhibiting HIV infection, experimental autoimmune encephalomyelitis, transplantation rejection, and asthma. This Ixodes ricinus (Common tick) protein is Salivary protein 15 Iric-3.